The sequence spans 329 residues: Protein RecA (329 aa).

Residue 63 to 70 (GNESSGKT) participates in ATP binding.

The protein belongs to the RecA family.

It localises to the cytoplasm. Its function is as follows. Can catalyze the hydrolysis of ATP in the presence of single-stranded DNA, the ATP-dependent uptake of single-stranded DNA by duplex DNA, and the ATP-dependent hybridization of homologous single-stranded DNAs. It interacts with LexA causing its activation and leading to its autocatalytic cleavage. The chain is Protein RecA from Malacoplasma penetrans (strain HF-2) (Mycoplasma penetrans).